We begin with the raw amino-acid sequence, 219 residues long: U-scoloptoxin(11)-Sm7a (219 aa).

An N-terminal signal peptide occupies residues 1–15; sequence MYLFLMINYFVLANS.

This sequence belongs to the scoloptoxin-11 family. Contains 8 disulfide bonds. Expressed by the venom gland.

It localises to the secreted. The sequence is that of U-scoloptoxin(11)-Sm7a from Scolopendra morsitans (Tanzanian blue ringleg centipede).